The chain runs to 218 residues: N-(5'-phosphoribosyl)anthranilate isomerase (218 aa).

Belongs to the TrpF family.

The enzyme catalyses N-(5-phospho-beta-D-ribosyl)anthranilate = 1-(2-carboxyphenylamino)-1-deoxy-D-ribulose 5-phosphate. Its pathway is amino-acid biosynthesis; L-tryptophan biosynthesis; L-tryptophan from chorismate: step 3/5. This chain is N-(5'-phosphoribosyl)anthranilate isomerase, found in Halalkalibacterium halodurans (strain ATCC BAA-125 / DSM 18197 / FERM 7344 / JCM 9153 / C-125) (Bacillus halodurans).